We begin with the raw amino-acid sequence, 443 residues long: Chromosomal replication initiator protein DnaA (443 aa).

The segment at 1–73 (MYGDYRQIWE…YDAASKVTNR (73 aa)) is domain I, interacts with DnaA modulators. Positions 73-106 (RFIEIKILSEDEEEYREIKESIERENSSESTLLS) are domain II. A domain III, AAA+ region region spans residues 107 to 323 (TLNPKYTFDT…GALIRIVAFA (217 aa)). 4 residues coordinate ATP: Gly151, Gly153, Lys154, and Thr155. Residues 324-443 (TLTKSNIDLE…EELKKRIKGY (120 aa)) form a domain IV, binds dsDNA region.

Belongs to the DnaA family. Oligomerizes as a right-handed, spiral filament on DNA at oriC.

The protein resides in the cytoplasm. Plays an essential role in the initiation and regulation of chromosomal replication. ATP-DnaA binds to the origin of replication (oriC) to initiate formation of the DNA replication initiation complex once per cell cycle. Binds the DnaA box (a 9 base pair repeat at the origin) and separates the double-stranded (ds)DNA. Forms a right-handed helical filament on oriC DNA; dsDNA binds to the exterior of the filament while single-stranded (ss)DNA is stabiized in the filament's interior. The ATP-DnaA-oriC complex binds and stabilizes one strand of the AT-rich DNA unwinding element (DUE), permitting loading of DNA polymerase. After initiation quickly degrades to an ADP-DnaA complex that is not apt for DNA replication. Binds acidic phospholipids. The sequence is that of Chromosomal replication initiator protein DnaA from Caldanaerobacter subterraneus subsp. tengcongensis (strain DSM 15242 / JCM 11007 / NBRC 100824 / MB4) (Thermoanaerobacter tengcongensis).